We begin with the raw amino-acid sequence, 411 residues long: Multifunctional CCA protein (411 aa).

The ATP site is built by Gly-8 and Arg-11. CTP is bound by residues Gly-8 and Arg-11. Mg(2+) contacts are provided by Asp-21 and Asp-23. Residues Arg-91, Arg-137, and Arg-140 each contribute to the ATP site. 3 residues coordinate CTP: Arg-91, Arg-137, and Arg-140. In terms of domain architecture, HD spans Ser-228–Trp-333.

This sequence belongs to the tRNA nucleotidyltransferase/poly(A) polymerase family. Bacterial CCA-adding enzyme type 1 subfamily. Monomer. Can also form homodimers and oligomers. Mg(2+) is required as a cofactor. Requires Ni(2+) as cofactor.

The enzyme catalyses a tRNA precursor + 2 CTP + ATP = a tRNA with a 3' CCA end + 3 diphosphate. It catalyses the reaction a tRNA with a 3' CCA end + 2 CTP + ATP = a tRNA with a 3' CCACCA end + 3 diphosphate. In terms of biological role, catalyzes the addition and repair of the essential 3'-terminal CCA sequence in tRNAs without using a nucleic acid template. Adds these three nucleotides in the order of C, C, and A to the tRNA nucleotide-73, using CTP and ATP as substrates and producing inorganic pyrophosphate. tRNA 3'-terminal CCA addition is required both for tRNA processing and repair. Also involved in tRNA surveillance by mediating tandem CCA addition to generate a CCACCA at the 3' terminus of unstable tRNAs. While stable tRNAs receive only 3'-terminal CCA, unstable tRNAs are marked with CCACCA and rapidly degraded. This Actinobacillus pleuropneumoniae serotype 5b (strain L20) protein is Multifunctional CCA protein.